The sequence spans 51 residues: MSALKKSFIKRKLAKKQKQNRPMPQWVRMKTGNTMKYNAKRRHWRRTKLKL.

The interval 1-23 (MSALKKSFIKRKLAKKQKQNRPM) is disordered. Residues 7–19 (SFIKRKLAKKQKQ) show a composition bias toward basic residues.

It belongs to the eukaryotic ribosomal protein eL39 family. In terms of assembly, interacts with impact.

This chain is Large ribosomal subunit protein eL39 (rpl-39), found in Caenorhabditis elegans.